Reading from the N-terminus, the 536-residue chain is Phosphoenolpyruvate carboxykinase (ATP) (536 aa).

Substrate is bound by residues arginine 62, tyrosine 203, and lysine 209. ATP is bound by residues lysine 209, histidine 228, and 244 to 252; that span reads GLSGTGKTT. Mn(2+)-binding residues include lysine 209 and histidine 228. Aspartate 265 lines the Mn(2+) pocket. ATP is bound by residues glutamate 293, arginine 329, 445-446, and threonine 451; that span reads RI. Arginine 329 serves as a coordination point for substrate.

It belongs to the phosphoenolpyruvate carboxykinase (ATP) family. In terms of assembly, monomer. Requires Mn(2+) as cofactor.

It is found in the cytoplasm. It catalyses the reaction oxaloacetate + ATP = phosphoenolpyruvate + ADP + CO2. It functions in the pathway carbohydrate biosynthesis; gluconeogenesis. Involved in the gluconeogenesis. Catalyzes the conversion of oxaloacetate (OAA) to phosphoenolpyruvate (PEP) through direct phosphoryl transfer between the nucleoside triphosphate and OAA. This chain is Phosphoenolpyruvate carboxykinase (ATP), found in Actinobacillus pleuropneumoniae serotype 5b (strain L20).